The following is a 730-amino-acid chain: Ribosomal RNA large subunit methyltransferase K/L (730 aa).

Residues 46 to 157 form the THUMP domain; it reads TAYRLCVWSR…RGEAILSLDL (112 aa). The tract at residues 394-418 is disordered; it reads GERREAQPEGTEARQQVPQASEPAR.

Belongs to the methyltransferase superfamily. RlmKL family.

Its subcellular location is the cytoplasm. It carries out the reaction guanosine(2445) in 23S rRNA + S-adenosyl-L-methionine = N(2)-methylguanosine(2445) in 23S rRNA + S-adenosyl-L-homocysteine + H(+). It catalyses the reaction guanosine(2069) in 23S rRNA + S-adenosyl-L-methionine = N(2)-methylguanosine(2069) in 23S rRNA + S-adenosyl-L-homocysteine + H(+). Specifically methylates the guanine in position 2445 (m2G2445) and the guanine in position 2069 (m7G2069) of 23S rRNA. This Pseudomonas putida (strain ATCC 47054 / DSM 6125 / CFBP 8728 / NCIMB 11950 / KT2440) protein is Ribosomal RNA large subunit methyltransferase K/L.